Reading from the N-terminus, the 918-residue chain is Hexokinase-1 (918 aa).

Met1 bears the N-acetylmethionine mark. The mitochondrial-binding peptide (MBP) stretch occupies residues 1 to 10 (MIAAQLLAYY). 2 Hexokinase domains span residues 16–458 (DDQV…MVTA) and 464–906 (AEQH…LITA). ATP is bound by residues Arg30 and 84-89 (DLGGSS). A hexokinase small subdomain 1 region spans residues 73–207 (DGSEKGDFIA…DYDANIVAVV (135 aa)). Residue 84 to 91 (DLGGSSFR) participates in D-glucose 6-phosphate binding. D-glucose is bound by residues Ser155, 172-173 (TK), and 208-209 (ND). The hexokinase large subdomain 1 stretch occupies residues 208 to 447 (NDTVGTMIDC…SDVRFLLSES (240 aa)). Asp209 and Thr232 together coordinate D-glucose 6-phosphate. D-glucose is bound by residues Asn235, Glu260, and 291-294 (QRFE). At Ser337 the chain carries Phosphoserine. 413-415 (DGS) lines the D-glucose 6-phosphate pocket. ATP-binding positions include 425-426 (RR) and 532-537 (DLGGTN). The segment at 521–655 (DGTEDGDFLA…EFDLDVVAVV (135 aa)) is hexokinase small subdomain 2. 532–536 (DLGGT) is a binding site for D-glucose 6-phosphate. Residues 603–604 (SF), 620–621 (TK), and 656–657 (ND) each bind D-glucose. Positions 656-895 (NDTVGTMMTC…CNVSFLLSED (240 aa)) are hexokinase large subdomain 2. 2 residues coordinate D-glucose 6-phosphate: Asp657 and Thr680. Thr680 is a binding site for ATP. D-glucose-binding positions include 682–683 (SN), Glu708, and Glu742. ATP-binding positions include 747–748 (GI), 784–788 (TKFLS), and 863–867 (TLYKL). Residues 861 to 863 (DGT) and Ser897 each bind D-glucose 6-phosphate.

Belongs to the hexokinase family. In terms of assembly, monomer. Interacts with RABL2/RABL2A; binds preferentially to GTP-bound RABL2. Interacts with VDAC1. The HK1-VDAC1 complex interacts with ATF2. Interacts (via N-terminal spermatogenic cell-specific region) with PFKM (via C-terminus). Interacts with SMAD5.

The protein resides in the mitochondrion outer membrane. Its subcellular location is the cytoplasm. It localises to the cytosol. The enzyme catalyses a D-hexose + ATP = a D-hexose 6-phosphate + ADP + H(+). The catalysed reaction is D-fructose + ATP = D-fructose 6-phosphate + ADP + H(+). It catalyses the reaction D-glucose + ATP = D-glucose 6-phosphate + ADP + H(+). It carries out the reaction D-mannose + ATP = D-mannose 6-phosphate + ADP + H(+). The enzyme catalyses D-glucosamine + ATP = D-glucosamine 6-phosphate + ADP + H(+). It functions in the pathway carbohydrate metabolism; hexose metabolism. Its pathway is carbohydrate degradation; glycolysis; D-glyceraldehyde 3-phosphate and glycerone phosphate from D-glucose: step 1/4. With respect to regulation, hexokinase is an allosteric enzyme inhibited by its product D-glucose 6-phosphate. Hexokinase activity is inhibited by N-acetyl-D-glucosamine. Functionally, catalyzes the phosphorylation of various hexoses, such as D-glucose, D-glucosamine, D-fructose, D-mannose and 2-deoxy-D-glucose, to hexose 6-phosphate (D-glucose 6-phosphate, D-glucosamine 6-phosphate, D-fructose 6-phosphate, D-mannose 6-phosphate and 2-deoxy-D-glucose 6-phosphate, respectively). Does not phosphorylate N-acetyl-D-glucosamine. Mediates the initial step of glycolysis by catalyzing phosphorylation of D-glucose to D-glucose 6-phosphate. Involved in innate immunity and inflammation by acting as a pattern recognition receptor for bacterial peptidoglycan. When released in the cytosol, N-acetyl-D-glucosamine component of bacterial peptidoglycan inhibits the hexokinase activity of HK1 and causes its dissociation from mitochondrial outer membrane, thereby activating the NLRP3 inflammasome. The protein is Hexokinase-1 of Bos taurus (Bovine).